Reading from the N-terminus, the 396-residue chain is LIM/homeobox protein Lhx9 (396 aa).

2 consecutive LIM zinc-binding domains span residues 69 to 130 (ALCA…RFSV) and 131 to 193 (QRCA…LIQG). 3 disordered regions span residues 248 to 272 (ENDA…RMRT), 328 to 365 (RQEN…TDLT), and 377 to 396 (SSLD…TNLF). The homeobox DNA-binding region spans 267 to 326 (TKRMRTSFKHHQLRTMKSYFAINHNPDAKDLKQLAQKTGLTKRVLQVWFQNARAKFRRNV). A compositionally biased stretch (low complexity) spans 352–365 (LTPPSTATTLTDLT). Positions 384 to 396 (SGSPPQTTLTNLF) are enriched in polar residues.

The protein resides in the nucleus. May be involved in gonadal development. The polypeptide is LIM/homeobox protein Lhx9 (lhx9) (Danio rerio (Zebrafish)).